Consider the following 216-residue polypeptide: DNA-directed RNA polymerase subunit alpha (216 aa).

It belongs to the RNA polymerase alpha chain family. In plastids the minimal PEP RNA polymerase catalytic core is composed of four subunits: alpha, beta, beta', and beta''. When a (nuclear-encoded) sigma factor is associated with the core the holoenzyme is formed, which can initiate transcription.

It localises to the plastid. Its subcellular location is the chloroplast. It catalyses the reaction RNA(n) + a ribonucleoside 5'-triphosphate = RNA(n+1) + diphosphate. Its function is as follows. DNA-dependent RNA polymerase catalyzes the transcription of DNA into RNA using the four ribonucleoside triphosphates as substrates. The protein is DNA-directed RNA polymerase subunit alpha (rpoA) of Euglena gracilis.